A 473-amino-acid chain; its full sequence is Benzoyl-CoA oxygenase component B (473 aa).

Belongs to the benzoyl-CoA oxygenase component B family. As to quaternary structure, monomer. The subunit composition of the active BoxA/BoxB protein complex is not known. Fe cation is required as a cofactor.

The catalysed reaction is benzoyl-CoA + NADPH + O2 + H(+) = 2,3-epoxy-2,3-dihydrobenzoyl-CoA + NADP(+) + H2O. The BoxA/BoxB complex catalyzes the aerobic reduction/oxygenation of the aromatic ring of benzoyl-CoA to form 2,3-epoxy-2,3-dihydrobenzoyl-CoA. BoxB acts as the benzoyl-CoA oxygenase, after being reduced by the reductase component BoxA. BoxAB does not act on NADH or benzoate. This chain is Benzoyl-CoA oxygenase component B (boxB), found in Aromatoleum evansii (Azoarcus evansii).